We begin with the raw amino-acid sequence, 225 residues long: MKDLFLFSDLIYHNHLFVYAFHFCLVAIIVVLVAKLATSKMQLVPRGLQNIVEAYLEGVISMGRDTLGSEALARKYLPLVATIGFVVFFSNAIGIIPGFESPTSSLNLTLTLALIVFFYYHFEGIKKNGFFKYFGHFMGPSKALAPLMFPVEIISHLSRIVSLSFRLFGNIKGDDLFLLVMLTLAPWFAPLPAYALLTLMAVLQTFIFMMLTYVYLAGAVAIEEH.

A run of 5 helical transmembrane segments spans residues 16 to 36 (LFVY…VAKL), 79 to 99 (LVAT…IPGF), 105 to 125 (SLNL…FEGI), 176 to 196 (LFLL…AYAL), and 202 to 222 (VLQT…AVAI).

The protein belongs to the ATPase A chain family. As to quaternary structure, F-type ATPases have 2 components, CF(1) - the catalytic core - and CF(0) - the membrane proton channel. CF(1) has five subunits: alpha(3), beta(3), gamma(1), delta(1), epsilon(1). CF(0) has three main subunits: a(1), b(2) and c(9-12). The alpha and beta chains form an alternating ring which encloses part of the gamma chain. CF(1) is attached to CF(0) by a central stalk formed by the gamma and epsilon chains, while a peripheral stalk is formed by the delta and b chains.

It localises to the cell inner membrane. In terms of biological role, key component of the proton channel; it plays a direct role in the translocation of protons across the membrane. In Campylobacter curvus (strain 525.92), this protein is ATP synthase subunit a.